The chain runs to 208 residues: FAS-associated death domain protein (208 aa).

One can recognise a DED domain in the interval proline 3–aspartate 81. A Death domain is found at leucine 97–glutamine 181. (Microbial infection) N-beta-linked (GlcNAc) arginine glycosylation occurs at arginine 117. The interval glutamine 187–serine 208 is disordered. A Phosphoserine modification is found at serine 194.

In terms of assembly, can self-associate. Component of the AIM2 PANoptosome complex, a multiprotein complex that drives inflammatory cell death (PANoptosis). Component of the death-induced signaling complex (DISC) composed of cell surface receptor FAS/CD95 or TNFRSF1A, adapter protein FADD and the CASP8 protease; recruitment of CASP8 to the complex is required for processing of CASP8 into the p18 and p10 subunits. Interacts (via death domain) with FAS (via death domain). Interacts directly (via DED domain) with NOL3 (via CARD domain); inhibits death-inducing signaling complex (DISC) assembly by inhibiting the increase in FAS-FADD binding induced by FAS activation. Interacts with CFLAR, PEA15 and MBD4. When phosphorylated, part of a complex containing HIPK3 and FAS. May interact with MAVS/IPS1. Interacts with MOCV v-CFLAR protein and PIDD1. Interacts with RIPK1 and TRADD. Interacts with stimulated TNFRSF10B. Interacts with DDX24. As to quaternary structure, (Microbial infection) Interacts with human papillomavirus 16/HPV16 protein E6. (Microbial infection) Interacts with molluscum contagiosum virus proteins MC159L/v-CFLAR and MC160L. In terms of processing, (Microbial infection) Glycosylated at Arg-117 by enteropathogenic E.coli protein NleB1, C.rodentium protein NleB and S.typhimurium protein Ssek1: arginine GlcNAcylation prevents recruitment of caspase-8 or caspase-10 to the activated Fas (CD95) or TNFR-1 receptors. In terms of tissue distribution, expressed in a wide variety of tissues, except for peripheral blood mononuclear leukocytes.

It is found in the cytoplasm. Apoptotic adapter molecule that recruits caspases CASP8 or CASP10 to the activated FAS/CD95 or TNFRSF1A/TNFR-1 receptors. The resulting aggregate called the death-inducing signaling complex (DISC) performs CASP8 proteolytic activation. Active CASP8 initiates the subsequent cascade of caspases mediating apoptosis. Involved in interferon-mediated antiviral immune response, playing a role in the positive regulation of interferon signaling. The chain is FAS-associated death domain protein from Homo sapiens (Human).